The sequence spans 788 residues: Spastin (788 aa).

A disordered region spans residues 1–105; it reads MVRTKNQSSS…PRSAGGPSSV (105 aa). At 1-116 the chain is on the cytoplasmic side; the sequence is MVRTKNQSSS…KQNLYVVSFP (116 aa). Residues 1 to 227 form a required for localization to punctate cytoplasmic foci region; sequence MVRTKNQSSS…NRSGSGYSPG (227 aa). Composition is skewed to low complexity over residues 8-48 and 57-75; these read SSSS…SSHR and ATNV…SSPD. Positions 117-137 form an intramembrane region, helical; that stretch reads IIFLFNVLRSLIYQLFCIFRY. Residues 138–788 lie on the Cytoplasmic side of the membrane; that stretch reads LYGASTKVIY…WSSDYGDITI (651 aa). A sufficient for interaction with microtubules and microtubule severing region spans residues 227 to 788; sequence GPGDPLLAKQ…WSSDYGDITI (562 aa). The region spanning 240-315 is the MIT domain; that stretch reads HRRAFEYISK…SMARDRLHFL (76 aa). Residues 331–353 are compositionally biased toward basic and acidic residues; sequence EKQKANESREQQQKPQKAREAAD. The disordered stretch occupies residues 331 to 484; it reads EKQKANESRE…SGSGSGASTP (154 aa). Positions 387-400 are enriched in low complexity; that stretch reads ATATTPTSSSSLAS. Polar residues-rich tracts occupy residues 419-433 and 453-469; these read NKSQ…SKTS and QFSS…RTPI. The required for interaction with microtubules stretch occupies residues 471–485; the sequence is NNGASGSGSGASTPV. Position 553–560 (553–560) interacts with ATP; the sequence is GPPGNGKT.

Belongs to the AAA ATPase family. Spastin subfamily. Homohexamer. The homohexamer is stabilized by ATP-binding. The homohexamer may adopt a ring conformation through which microtubules pass prior to being severed. Interacts with microtubules. Interacts with atl; may be involved in microtubule dynamics.

Its subcellular location is the membrane. It localises to the cytoplasm. The protein localises to the cytoskeleton. It is found in the microtubule organizing center. The protein resides in the centrosome. Its subcellular location is the chromosome. It localises to the lipid droplet. The catalysed reaction is n ATP + n H2O + a microtubule = n ADP + n phosphate + (n+1) alpha/beta tubulin heterodimers.. In terms of biological role, ATP-dependent microtubule severing protein. Stimulates microtubule minus-end depolymerization and poleward microtubule flux in the mitotic spindle. Regulates microtubule stability in the neuromuscular junction synapse. Involved in lipid metabolism by regulating the size and distribution of lipid droplets. Involved in axon regeneration by regulating microtubule severing. This is Spastin from Drosophila persimilis (Fruit fly).